A 480-amino-acid polypeptide reads, in one-letter code: Aromatic-L-amino-acid decarboxylase (480 aa).

Position 1 is an N-acetylmethionine (M1). Repeat copies occupy residues 58–115 and 118–178. Positions 58–178 are 2 X approximate tandem repeats; that stretch reads GDIERIIMPG…AASPELTQAA (121 aa). T82 contributes to the substrate binding site. 2 residues coordinate pyridoxal 5'-phosphate: A148 and S149. Substrate is bound at residue H192. Pyridoxal 5'-phosphate contacts are provided by T246 and N300. Position 303 is an N6-(pyridoxal phosphate)lysine (K303).

This sequence belongs to the group II decarboxylase family. In terms of assembly, homodimer. Pyridoxal 5'-phosphate serves as cofactor.

The enzyme catalyses L-dopa + H(+) = dopamine + CO2. It carries out the reaction 5-hydroxy-L-tryptophan + H(+) = serotonin + CO2. The protein operates within catecholamine biosynthesis; dopamine biosynthesis; dopamine from L-tyrosine: step 2/2. Functionally, catalyzes the decarboxylation of L-3,4-dihydroxyphenylalanine (DOPA) to dopamine and L-5-hydroxytryptophan to serotonin. The sequence is that of Aromatic-L-amino-acid decarboxylase (DDC) from Cavia porcellus (Guinea pig).